The primary structure comprises 384 residues: S-adenosylmethionine synthase (384 aa).

H15 contributes to the ATP binding site. D17 is a Mg(2+) binding site. E43 is a K(+) binding site. 2 residues coordinate L-methionine: E56 and Q99. The interval Q99–R109 is flexible loop. ATP is bound by residues D164–K166, R230–F231, D239, R245–K246, A262, and K266. D239 provides a ligand contact to L-methionine. Residue K270 participates in L-methionine binding.

It belongs to the AdoMet synthase family. In terms of assembly, homotetramer; dimer of dimers. Mg(2+) is required as a cofactor. It depends on K(+) as a cofactor.

The protein resides in the cytoplasm. It catalyses the reaction L-methionine + ATP + H2O = S-adenosyl-L-methionine + phosphate + diphosphate. It participates in amino-acid biosynthesis; S-adenosyl-L-methionine biosynthesis; S-adenosyl-L-methionine from L-methionine: step 1/1. Functionally, catalyzes the formation of S-adenosylmethionine (AdoMet) from methionine and ATP. The overall synthetic reaction is composed of two sequential steps, AdoMet formation and the subsequent tripolyphosphate hydrolysis which occurs prior to release of AdoMet from the enzyme. In Escherichia fergusonii (strain ATCC 35469 / DSM 13698 / CCUG 18766 / IAM 14443 / JCM 21226 / LMG 7866 / NBRC 102419 / NCTC 12128 / CDC 0568-73), this protein is S-adenosylmethionine synthase.